A 122-amino-acid chain; its full sequence is UPF0102 protein BQ09720 (122 aa).

The protein belongs to the UPF0102 family.

The chain is UPF0102 protein BQ09720 from Bartonella quintana (strain Toulouse) (Rochalimaea quintana).